The following is a 151-amino-acid chain: Phosphopantetheine adenylyltransferase (151 aa).

Threonine 9 is a binding site for substrate. ATP contacts are provided by residues 9–10 and histidine 17; that span reads TF. Substrate is bound by residues lysine 41, threonine 73, and arginine 87. ATP-binding positions include 88 to 90, glutamate 98, and 122 to 128; these read GIR and LTSISST.

It belongs to the bacterial CoaD family. In terms of assembly, homohexamer. Requires Mg(2+) as cofactor.

Its subcellular location is the cytoplasm. It catalyses the reaction (R)-4'-phosphopantetheine + ATP + H(+) = 3'-dephospho-CoA + diphosphate. Its pathway is cofactor biosynthesis; coenzyme A biosynthesis; CoA from (R)-pantothenate: step 4/5. In terms of biological role, reversibly transfers an adenylyl group from ATP to 4'-phosphopantetheine, yielding dephospho-CoA (dPCoA) and pyrophosphate. The sequence is that of Phosphopantetheine adenylyltransferase from Phocaeicola vulgatus (strain ATCC 8482 / DSM 1447 / JCM 5826 / CCUG 4940 / NBRC 14291 / NCTC 11154) (Bacteroides vulgatus).